A 292-amino-acid chain; its full sequence is Manganese transport system membrane protein MntC (292 aa).

A run of 8 helical transmembrane segments spans residues Ala20–Leu40, Val58–Ile78, Ser96–Met116, Thr137–Tyr157, Val168–Leu188, Leu190–Thr210, Leu226–Ile246, and Val249–Phe269.

Belongs to the ABC-3 integral membrane protein family.

The protein resides in the cell membrane. In terms of biological role, this protein is probably a component of a manganese permease, a binding protein-dependent, ATP-driven transport system. The sequence is that of Manganese transport system membrane protein MntC (mntC) from Halalkalibacterium halodurans (strain ATCC BAA-125 / DSM 18197 / FERM 7344 / JCM 9153 / C-125) (Bacillus halodurans).